The sequence spans 125 residues: Large ribosomal subunit protein bL12 (125 aa).

This sequence belongs to the bacterial ribosomal protein bL12 family. Homodimer. Part of the ribosomal stalk of the 50S ribosomal subunit. Forms a multimeric L10(L12)X complex, where L10 forms an elongated spine to which 2 to 4 L12 dimers bind in a sequential fashion. Binds GTP-bound translation factors.

Its function is as follows. Forms part of the ribosomal stalk which helps the ribosome interact with GTP-bound translation factors. Is thus essential for accurate translation. In Methylibium petroleiphilum (strain ATCC BAA-1232 / LMG 22953 / PM1), this protein is Large ribosomal subunit protein bL12.